The sequence spans 264 residues: Claudin-18 (264 aa).

Topologically, residues 1–6 (MATTTC) are cytoplasmic. The chain crosses the membrane as a helical span at residues 7-27 (QVVGLLLSLLGLAGCIAATGM). Over 28–80 (DMWSTQDLYDNPVTAVFQYEGLWRSCVQQSSGFTECRPYFTILGLPAMLQAVR) the chain is Extracellular. A helical transmembrane segment spans residues 81 to 101 (ALMIVGIVLGVIGILVSIFAL). Over 102–122 (KCIRIGSMDDSAKAKMTLTSG) the chain is Cytoplasmic. A helical membrane pass occupies residues 123–143 (ILFIISGICAIIGVSVFANML). Residues 144-176 (VTNFWMSTANMYSGMGGMGGMVQTVQTRYTFGA) are Extracellular-facing. The chain crosses the membrane as a helical span at residues 177-197 (ALFVGWVAGGLTLIGGVMMCI). At 198–264 (ACRGLTPDDS…QSHPTKYDYV (67 aa)) the chain is on the cytoplasmic side. The tract at residues 198 to 264 (ACRGLTPDDS…QSHPTKYDYV (67 aa)) is required for role in regulation of RANKL-induced osteoclast differentiation. A Phosphoserine modification is found at S217. A disordered region spans residues 241 to 264 (KKIYDGGARTEDDEQSHPTKYDYV). The span at 242-264 (KIYDGGARTEDDEQSHPTKYDYV) shows a compositional bias: basic and acidic residues.

It belongs to the claudin family. In terms of assembly, interacts with TJP2/ZO-2. Interacts with TJP1/ZO-1. Interacts with YAP1 (phosphorylated); the interaction sequesters YAP1 away from the nucleus and thereby restricts transcription of YAP1 target genes. Interacts with CLDN19. In terms of tissue distribution, expressed in the lung (at protein level). As to expression, expressed in lung. Expressed in the stomach. Expressed in lung. In terms of tissue distribution, expressed in stomach. Expressed in bone. As to expression, expressed in stomach.

The protein localises to the cell junction. Its subcellular location is the tight junction. It is found in the cell membrane. It localises to the lateral cell membrane. Functionally, involved in alveolar fluid homeostasis via regulation of alveolar epithelial tight junction composition and therefore ion transport and solute permeability, potentially via downstream regulation of the actin cytoskeleton organization and beta-2-adrenergic signaling. Required for lung alveolarization and maintenance of the paracellular alveolar epithelial barrier. Acts to maintain epithelial progenitor cell proliferation and organ size, via regulation of YAP1 localization away from the nucleus and thereby restriction of YAP1 target gene transcription. Acts as a negative regulator of RANKL-induced osteoclast differentiation, potentially via relocation of TJP2/ZO-2 away from the nucleus, subsequently involved in bone resorption in response to calcium deficiency. Mediates the osteoprotective effects of estrogen, potentially via acting downstream of estrogen signaling independently of RANKL signaling pathways. In terms of biological role, involved in the maintenance of homeostasis of the alveolar microenvironment via regulation of pH and subsequent T-cell activation in the alveolar space, is therefore indirectly involved in limiting C.neoformans infection. Required for the formation of the gastric paracellular barrier via its role in tight junction formation, thereby involved in the response to gastric acidification. The chain is Claudin-18 (Cldn18) from Mus musculus (Mouse).